Reading from the N-terminus, the 477-residue chain is Protein nucleotidyltransferase YdiU (477 aa).

Residues Gly89, Gly91, Arg92, Lys112, Asp124, Gly125, Arg178, and Arg185 each contribute to the ATP site. The active-site Proton acceptor is the Asp257. Residues Asn258 and Asp267 each contribute to the Mg(2+) site. Asp267 lines the ATP pocket.

The protein belongs to the SELO family. The cofactor is Mg(2+). Requires Mn(2+) as cofactor.

The catalysed reaction is L-seryl-[protein] + ATP = 3-O-(5'-adenylyl)-L-seryl-[protein] + diphosphate. It catalyses the reaction L-threonyl-[protein] + ATP = 3-O-(5'-adenylyl)-L-threonyl-[protein] + diphosphate. The enzyme catalyses L-tyrosyl-[protein] + ATP = O-(5'-adenylyl)-L-tyrosyl-[protein] + diphosphate. It carries out the reaction L-histidyl-[protein] + UTP = N(tele)-(5'-uridylyl)-L-histidyl-[protein] + diphosphate. The catalysed reaction is L-seryl-[protein] + UTP = O-(5'-uridylyl)-L-seryl-[protein] + diphosphate. It catalyses the reaction L-tyrosyl-[protein] + UTP = O-(5'-uridylyl)-L-tyrosyl-[protein] + diphosphate. Functionally, nucleotidyltransferase involved in the post-translational modification of proteins. It can catalyze the addition of adenosine monophosphate (AMP) or uridine monophosphate (UMP) to a protein, resulting in modifications known as AMPylation and UMPylation. In Synechocystis sp. (strain ATCC 27184 / PCC 6803 / Kazusa), this protein is Protein nucleotidyltransferase YdiU.